The sequence spans 143 residues: Transcription antitermination protein NusB (143 aa).

This sequence belongs to the NusB family.

Its function is as follows. Involved in transcription antitermination. Required for transcription of ribosomal RNA (rRNA) genes. Binds specifically to the boxA antiterminator sequence of the ribosomal RNA (rrn) operons. In Methylacidiphilum infernorum (isolate V4) (Methylokorus infernorum (strain V4)), this protein is Transcription antitermination protein NusB.